The following is a 491-amino-acid chain: G2/mitotic-specific cyclin-2 (491 aa).

S2 is subject to N-acetylserine. 2 disordered regions span residues 59 to 107 (EGSR…DPSS) and 164 to 184 (HPAR…SGKK). Residues 67 to 77 (TRESVSRSTAA) are compositionally biased toward polar residues.

The protein belongs to the cyclin family. Cyclin AB subfamily. As to quaternary structure, interacts with NAP1.

Functionally, essential for the control of the cell cycle at the G2/M (mitosis) transition. Interacts with the CDC2 protein kinase to form MPF. G2/M cyclins accumulate steadily during G2 and are abruptly destroyed at mitosis. This is G2/mitotic-specific cyclin-2 (CLB2) from Saccharomyces cerevisiae (strain ATCC 204508 / S288c) (Baker's yeast).